Reading from the N-terminus, the 300-residue chain is Tegument protein VP22 (300 aa).

Residues 1 to 148 (MTSRRSVKSC…PARGRRPAQA (148 aa)) form a disordered region. 2 stretches are compositionally biased toward basic and acidic residues: residues 10–22 (CPRE…HEEL) and 50–61 (PRGEVRFLHYDE). The short motif at 163–166 (GRTK) is the Nuclear localization signal element. The segment at 174 to 267 (KKLHFSTAPP…LVNPDAAQDV (94 aa)) is interaction with gE. Positions 232-244 (LNELLDLTTIRVT) match the Nuclear export signal motif. Residues 269 to 292 (ATAAARGRPAGRAAATARAPARSA) are compositionally biased toward low complexity. The interval 269–300 (ATAAARGRPAGRAAATARAPARSASRPRRPLE) is disordered.

Belongs to the alphaherpesvirinae VP22 tegument protein family. In terms of assembly, interacts with gE (via C-terminus); this interaction is necessary for the recruitment of VP22 to the Golgi and its packaging into virions. Interacts with gM (via C-terminus). Interacts with VP16; this interaction allows the formation of a tripartite complex composed of VP16, VP22 and UL41/VHS. Interacts with the capsid-binding protein UL16. Interacts with host CGAS. Post-translationally, highly phosphorylated in the host cell. Packaging is selective for underphosphorylated forms.

It localises to the virion tegument. The protein localises to the host cytoplasm. It is found in the host nucleus. Its subcellular location is the host Golgi apparatus. Tegument protein that plays different roles during the time course of infection. Participates in both the accumulation of viral mRNAs and viral protein translation at late time of infection. Modulates the RNase activity of the virion host shutoff protein UL41 probably to ensure necessary levels of key cellular mRNAs and proteins. Plays a role in microtubule reorganization that occurs after viral infection by stabilizing microtubule network. Plays a role in the inhibition of host innate immune system by targeting the CGAS enzymatic activity which is the principal cytosolic DNA sensor that detects invading viral DNA. Acts by mediating disruption of liquid-like droplets in which CGAS is activated, thereby preventing CGAS activity. This Homo sapiens (Human) protein is Tegument protein VP22.